Reading from the N-terminus, the 741-residue chain is Aspartyl/asparaginyl beta-hydroxylase (741 aa).

The segment at 1 to 54 is disordered; sequence MAPRKNAKGGGGNSSSSGSGSGSGSGSPSTGSSGSSSSPGARREAKHGGHKNGR. Topologically, residues 1 to 62 are cytoplasmic; sequence MAPRKNAKGG…GRRGGISGGS (62 aa). Gly residues predominate over residues 8 to 25; it reads KGGGGNSSSSGSGSGSGS. Ser15 is subject to Phosphoserine. Residues 26–40 show a composition bias toward low complexity; sequence GSPSTGSSGSSSSPG. A helical; Signal-anchor for type II membrane protein transmembrane segment spans residues 63 to 83; it reads FFTWFMVIALLGVWTSVAVVW. Topologically, residues 84-741 are lumenal; sequence FDLVDYEEVL…PQQRRSLPAI (658 aa). Asp100, Asp102, Asp104, Asp106, and Asp111 together coordinate Ca(2+). Disordered stretches follow at residues 120–141 and 222–244; these read ERSP…AELE and TASQ…SDPS. A compositionally biased stretch (acidic residues) spans 231 to 242; the sequence is MEEMTNEQENSD. 5 TPR repeats span residues 324 to 357, 365 to 398, 437 to 470, 472 to 504, and 508 to 540; these read IKAE…YPQS, AQCE…PDAP, TTLK…TPND, FAKV…GDPG, and GRFY…GHFA. An N-linked (GlcNAc...) asparagine glycan is attached at Asn453. Trp608 contributes to the 2-oxoglutarate binding site. A disulfide bond links Cys624 and Cys631. Ser651 is a binding site for 2-oxoglutarate. Fe cation is bound at residue His662. A 2-oxoglutarate-binding site is contributed by 671–673; the sequence is RMH. Asn689 carries an N-linked (GlcNAc...) asparagine glycan. His708 contributes to the Fe cation binding site. Arg718 lines the 2-oxoglutarate pocket.

This sequence belongs to the aspartyl/asparaginyl beta-hydroxylase family. In terms of assembly, monomer. Isoform 2 interacts with CASQ2. Fe cation serves as cofactor. As to expression, isoform 1 is detected in heart, liver and ovary (at protein level). Detected in heart ventricle. Isoform 1 is widely expressed. Isoform 2 is detected in heart and skeletal muscle.

It localises to the endoplasmic reticulum membrane. The protein localises to the sarcoplasmic reticulum membrane. It carries out the reaction L-aspartyl-[protein] + 2-oxoglutarate + O2 = 3-hydroxy-L-aspartyl-[protein] + succinate + CO2. Functionally, specifically hydroxylates an Asp or Asn residue in certain epidermal growth factor-like (EGF) domains of a number of proteins. The sequence is that of Aspartyl/asparaginyl beta-hydroxylase (Asph) from Mus musculus (Mouse).